The sequence spans 123 residues: Guanine nucleotide exchange factor MSS4 (123 aa).

At Met-1 the chain carries N-acetylmethionine. The region spanning 9 to 123 (ELVSAEGRNR…YVALERVSHE (115 aa)) is the MSS4 domain. Zn(2+) is bound by residues Cys-23, Cys-26, Cys-94, and Cys-97.

Belongs to the DSS4/MSS4 family. In terms of assembly, interacts with RAB8A. As to expression, ubiquitous.

Guanine-nucleotide-releasing protein that acts on members of the SEC4/YPT1/RAB subfamily. Stimulates GDP release from both YPT1, RAB3A and RAB10, but is less active on these proteins than on the SEC4 protein. Might play a general role in vesicular transport. This is Guanine nucleotide exchange factor MSS4 (RABIF) from Homo sapiens (Human).